A 617-amino-acid chain; its full sequence is Ceramide transfer protein (617 aa).

Residues 1–11 (MSDNQSWNSSG) are compositionally biased toward polar residues. The disordered stretch occupies residues 1–23 (MSDNQSWNSSGSEEDLETESGPP). Positions 23-117 (PVERCGVLSK…WIDSIEQHKS (95 aa)) constitute a PH domain. A coiled-coil region spans residues 268–302 (REDSWQKRLDKEIEKRRRVEEAYKNAMTELKKKSH). The FFAT signature appears at 320–326 (EFFDAVE). Residues 332-344 (QDKIEQSQSEKGR) are compositionally biased toward basic and acidic residues. A disordered region spans residues 332–355 (QDKIEQSQSEKGRSHWPSSLPSTE). The START domain maps to 383–611 (DEHRFRIQVE…FTSYVQEKTA (229 aa)). Residues Glu-466, Gln-487, Asn-524, and Tyr-572 each coordinate an N-acylsphing-4-enine.

The protein localises to the cytoplasm. It localises to the golgi apparatus. Its subcellular location is the endoplasmic reticulum. It catalyses the reaction N-hexadecanoylsphing-4-enine(in) = N-hexadecanoylsphing-4-enine(out). Functionally, may mediate the intracellular trafficking of ceramide in a non-vesicular manner. The chain is Ceramide transfer protein (cert1) from Xenopus tropicalis (Western clawed frog).